A 147-amino-acid polypeptide reads, in one-letter code: Hemoglobin subunit beta (147 aa).

The Globin domain occupies 3–147 (EWTDKERSII…VVSALGKQYH (145 aa)). Heme b-binding residues include histidine 64 and histidine 93.

Belongs to the globin family. As to quaternary structure, heterotetramer of two alpha chains and two beta chains. In terms of tissue distribution, red blood cells.

Functionally, involved in oxygen transport from gills to the various peripheral tissues. This Trematomus hansoni (Striped rockcod) protein is Hemoglobin subunit beta (hbb).